We begin with the raw amino-acid sequence, 241 residues long: tRNA (guanine-N(7)-)-methyltransferase (241 aa).

4 residues coordinate S-adenosyl-L-methionine: E71, E96, D123, and D146. D146 is an active-site residue. Substrate contacts are provided by residues K150, D182, and 219 to 222; that span reads TKFE.

Belongs to the class I-like SAM-binding methyltransferase superfamily. TrmB family.

The catalysed reaction is guanosine(46) in tRNA + S-adenosyl-L-methionine = N(7)-methylguanosine(46) in tRNA + S-adenosyl-L-homocysteine. It functions in the pathway tRNA modification; N(7)-methylguanine-tRNA biosynthesis. Functionally, catalyzes the formation of N(7)-methylguanine at position 46 (m7G46) in tRNA. The chain is tRNA (guanine-N(7)-)-methyltransferase from Pseudoalteromonas translucida (strain TAC 125).